The sequence spans 613 residues: MATIPDWKLQLLARRRQEEASVRGREKAERERLSQMPAWKRGLLERRRAKLGLSPGEPSPVLGTVEAGPPDPDESAVLLEAIGPVHQNRFIRQERQQQQQQQQRSEELLAERKPGPLEARERRPSPGEMRDQSPKGRESREERLSPRETRERRLGIGGAQELSLRPLEARDWRQSPGEVGDRSSRLSEAWKWRLSPGETPERSLRLAESREQSPRRKEVESRLSPGESAYQKLGLTEAHKWRPDSRESQEQSLVQLEATEWRLRSGEERQDYSEECGRKEEWPVPGVAPKETAELSETLTREAQGNSSAGVEAAEQRPVEDGERGMKPTEGWKWTLNSGKAREWTPRDIEAQTQKPEPPESAEKLLESPGVEAGEGEAEKEEAGAQGRPLRALQNCCSVPSPLPPEDAGTGGLRQQEEEAVELQPPPPAPLSPPPPAPTAPQPPGDPLMSRLFYGVKAGPGVGAPRRSGHTFTVNPRRSVPPATPATPTSPATVDAAVPGAGKKRYPTAEEILVLGGYLRLSRSCLAKGSPERHHKQLKISFSETALETTYQYPSESSVLEELGPEPEVPSAPNPPAAQPDDEEDEEELLLLQPELQGGLRTKALIVDESCRR.

The span at 18-33 (EEASVRGREKAERERL) shows a compositional bias: basic and acidic residues. Disordered stretches follow at residues 18–231 (EEAS…SAYQ) and 266–500 (GEER…AVPG). Phosphoserine is present on residues serine 54, serine 125, serine 133, serine 175, and serine 195. Basic and acidic residues-rich tracts occupy residues 104-154 (RSEE…ERRL) and 167-191 (LEAR…EAWK). Threonine 199 is subject to Phosphothreonine. The segment covering 199–221 (TPERSLRLAESREQSPRRKEVES) has biased composition (basic and acidic residues). Position 224 is a phosphoserine (serine 224). Over residues 266–282 (GEERQDYSEECGRKEEW) the composition is skewed to basic and acidic residues. Residues 295–309 (LSETLTREAQGNSSA) show a composition bias toward polar residues. Basic and acidic residues-rich tracts occupy residues 314–327 (AEQR…RGMK), 340–350 (KAREWTPRDIE), and 357–366 (EPPESAEKLL). 2 positions are modified to phosphoserine: serine 368 and serine 432. Positions 424-446 (QPPPPAPLSPPPPAPTAPQPPGD) are enriched in pro residues. Residue lysine 457 is modified to N6-acetyllysine. The segment covering 476–499 (PRRSVPPATPATPTSPATVDAAVP) has biased composition (low complexity). Phosphoserine is present on residues serine 490 and serine 530. The interval 552–595 (QYPSESSVLEELGPEPEVPSAPNPPAAQPDDEEDEEELLLLQPE) is disordered. Residues 567–578 (PEVPSAPNPPAA) are compositionally biased toward pro residues. Acidic residues predominate over residues 580–589 (PDDEEDEEEL).

Interacts with Protein phosphatase 1 (PP1). In terms of tissue distribution, isoform 4 is predominantly expressed in leukocytes and spleen.

The protein localises to the cytoplasm. The protein resides in the cytoskeleton. May target protein phosphatase 1 to F-actin cytoskeleton. The chain is Phostensin (PPP1R18) from Homo sapiens (Human).